Here is a 172-residue protein sequence, read N- to C-terminus: Shikimate kinase (172 aa).

Residue 14 to 19 (GAGKST) coordinates ATP. Position 18 (Ser18) interacts with Mg(2+). Residues Asp36, Arg60, and Gly82 each coordinate substrate. Arg120 is an ATP binding site. Arg140 provides a ligand contact to substrate. Gln157 contributes to the ATP binding site.

Belongs to the shikimate kinase family. Monomer. It depends on Mg(2+) as a cofactor.

It localises to the cytoplasm. It carries out the reaction shikimate + ATP = 3-phosphoshikimate + ADP + H(+). It participates in metabolic intermediate biosynthesis; chorismate biosynthesis; chorismate from D-erythrose 4-phosphate and phosphoenolpyruvate: step 5/7. Functionally, catalyzes the specific phosphorylation of the 3-hydroxyl group of shikimic acid using ATP as a cosubstrate. In Pseudoalteromonas translucida (strain TAC 125), this protein is Shikimate kinase.